The following is a 427-amino-acid chain: MKLKTNIRHLHGSIRVPGDKSISHRSIIFGSLAEGETKVYDILRGEDVLSTMQVFRDLGVEIEDKDGVITIQGVGMAGLKAPQNALNMGNSGTSIRLISGVLAGADFEVEMFGDDSLSKRPMDRVTLPLKKMGVSISGQTERDLPPLRLKGTKNLRPIHYELPIASAQVKSALMFAALQAKGESVIIEKEYTRNHTEDMLKQFGGHLSVDGKKITVQGPQKLTGQKVVVPGDISSAAFWLVAGLIAPNSRLVLQNVGINETRTGIIDVIRAMGGKLEITEIDPVAKSATLIVESSDLKGTEIGGALIPRLIDELPIIALLATQAQGVTVIKDAEELKVKETDRIQVVADALNSMGADITPTADGMIIKGKSALHGARVNTFGDHRIGMMTAIAALLVADGEVELDRAEAINTSYPSFFDDLESLIHG.

K20 serves as a coordination point for phosphoenolpyruvate. 3-phosphoshikimate is bound by residues S21 and R25. Phosphoenolpyruvate contacts are provided by G92 and R120. 3-phosphoshikimate contacts are provided by S166, A167, Q168, D312, and K339. Q168 contributes to the phosphoenolpyruvate binding site. D312 (proton acceptor) is an active-site residue. Phosphoenolpyruvate is bound by residues R343 and R385.

As to quaternary structure, homotetramer.

The protein localises to the cytoplasm. The catalysed reaction is 3-phosphoshikimate + phosphoenolpyruvate = 5-O-(1-carboxyvinyl)-3-phosphoshikimate + phosphate. It participates in metabolic intermediate biosynthesis; chorismate biosynthesis; chorismate from D-erythrose 4-phosphate and phosphoenolpyruvate: step 6/7. Competitively inhibited by glyphosate. Activated by ammonium, rubidium or potassium ions. Its function is as follows. Catalyzes the transfer of the enolpyruvyl moiety of phosphoenolpyruvate (PEP) to the 5-hydroxyl of shikimate-3-phosphate (S3P) to produce enolpyruvyl shikimate-3-phosphate and inorganic phosphate. The protein is 3-phosphoshikimate 1-carboxyvinyltransferase of Streptococcus pneumoniae serotype 4 (strain ATCC BAA-334 / TIGR4).